We begin with the raw amino-acid sequence, 209 residues long: Protein GrpE (209 aa).

The segment covering 1 to 13 (MSNDSSKAKQNQV) has biased composition (polar residues). The disordered stretch occupies residues 1-33 (MSNDSSKAKQNQVDEAVEGEILTESEVETGNDE). Acidic residues predominate over residues 15–31 (EAVEGEILTESEVETGN).

Belongs to the GrpE family. Homodimer.

The protein localises to the cytoplasm. Participates actively in the response to hyperosmotic and heat shock by preventing the aggregation of stress-denatured proteins, in association with DnaK and GrpE. It is the nucleotide exchange factor for DnaK and may function as a thermosensor. Unfolded proteins bind initially to DnaJ; upon interaction with the DnaJ-bound protein, DnaK hydrolyzes its bound ATP, resulting in the formation of a stable complex. GrpE releases ADP from DnaK; ATP binding to DnaK triggers the release of the substrate protein, thus completing the reaction cycle. Several rounds of ATP-dependent interactions between DnaJ, DnaK and GrpE are required for fully efficient folding. The sequence is that of Protein GrpE from Shewanella woodyi (strain ATCC 51908 / MS32).